The sequence spans 314 residues: Probable carboxylesterase 2 (314 aa).

Positions 79-81 match the Involved in the stabilization of the negatively charged intermediate by the formation of the oxyanion hole motif; sequence HGG. Active-site residues include Ser-158, Asp-254, and His-286.

Belongs to the 'GDXG' lipolytic enzyme family. As to expression, expressed in roots and flowers.

The enzyme catalyses a carboxylic ester + H2O = an alcohol + a carboxylate + H(+). Functionally, carboxylesterase acting on esters with varying acyl chain length. The protein is Probable carboxylesterase 2 (CXE2) of Arabidopsis thaliana (Mouse-ear cress).